A 250-amino-acid chain; its full sequence is Hydroxyacylglutathione hydrolase (250 aa).

Zn(2+) is bound by residues H52, H54, D56, H57, H107, D128, and H166.

It belongs to the metallo-beta-lactamase superfamily. Glyoxalase II family. In terms of assembly, monomer. Zn(2+) is required as a cofactor.

It carries out the reaction an S-(2-hydroxyacyl)glutathione + H2O = a 2-hydroxy carboxylate + glutathione + H(+). Its pathway is secondary metabolite metabolism; methylglyoxal degradation; (R)-lactate from methylglyoxal: step 2/2. Thiolesterase that catalyzes the hydrolysis of S-D-lactoyl-glutathione to form glutathione and D-lactic acid. The protein is Hydroxyacylglutathione hydrolase of Neisseria gonorrhoeae (strain ATCC 700825 / FA 1090).